Here is a 171-residue protein sequence, read N- to C-terminus: MSDPKDSILPPLKWLSDQDPPVPTHIKDWLMELGSMTRRFENHCTYIHIKPQRECFITRDKLKEEAAHLPKSTRYWLREVILMGDNQPWLLGRTVIPQETLFEHNEALINLGDVPLGRYLFSIDKLTRDYIHIGRKDTLWARRSRLRLTGKPLLLTELFLAASPLYTTNPI.

Met36, Arg78, Leu116, and Glu157 together coordinate substrate.

Belongs to the UbiC family.

The protein localises to the cytoplasm. It catalyses the reaction chorismate = 4-hydroxybenzoate + pyruvate. The protein operates within cofactor biosynthesis; ubiquinone biosynthesis. In terms of biological role, removes the pyruvyl group from chorismate, with concomitant aromatization of the ring, to provide 4-hydroxybenzoate (4HB) for the ubiquinone pathway. This Bartonella henselae (strain ATCC 49882 / DSM 28221 / CCUG 30454 / Houston 1) (Rochalimaea henselae) protein is Probable chorismate pyruvate-lyase.